Consider the following 344-residue polypeptide: Eukaryotic translation initiation factor 3 subunit H (344 aa).

Positions 1–24 are disordered; it reads MATRKESTSTPTAPMASTSPGATL. Over residues 8 to 23 the composition is skewed to low complexity; sequence TSTPTAPMASTSPGAT. The 135-residue stretch at 31-165 folds into the MPN domain; it reads IQIEGLVVLK…LKAYRLTPKL (135 aa). Residues 256–305 form a disordered region; the sequence is SRNLSKQQQQKHQYTQRRQQENAQRQTRGETPLPEEDVSKMFKPPQPPPR. The span at 261–272 shows a compositional bias: low complexity; it reads KQQQQKHQYTQR.

Belongs to the eIF-3 subunit H family. As to quaternary structure, component of the eukaryotic translation initiation factor 3 (eIF-3) complex, which is composed of 13 subunits: eif3a, eif3b, eif3c, eif3d, eif3e, eif3f, eif3g, eif3h, eif3i, eif3j, eif3k, eif3l and eif3m.

It is found in the cytoplasm. Its function is as follows. Component of the eukaryotic translation initiation factor 3 (eIF-3) complex, which is involved in protein synthesis of a specialized repertoire of mRNAs and, together with other initiation factors, stimulates binding of mRNA and methionyl-tRNAi to the 40S ribosome. The eIF-3 complex specifically targets and initiates translation of a subset of mRNAs involved in cell proliferation. This is Eukaryotic translation initiation factor 3 subunit H (eif3h) from Salmo salar (Atlantic salmon).